Reading from the N-terminus, the 543-residue chain is CTP synthase (543 aa).

An amidoligase domain region spans residues 1 to 267; it reads MKQTKYIFVT…LSPIAEILDL (267 aa). Residue serine 15 coordinates CTP. Serine 15 serves as a coordination point for UTP. ATP contacts are provided by residues 16-21 and aspartate 73; that span reads SLGKGI. Residues aspartate 73 and glutamate 141 each coordinate Mg(2+). CTP-binding positions include 148-150, 188-193, and lysine 224; these read DIE and KTKPTQ. Residues 188–193 and lysine 224 contribute to the UTP site; that span reads KTKPTQ. The Glutamine amidotransferase type-1 domain occupies 292–543; it reads KIAFVGKYVD…IKAAINYEDN (252 aa). Glycine 354 is a binding site for L-glutamine. Residue cysteine 381 is the Nucleophile; for glutamine hydrolysis of the active site. L-glutamine is bound by residues 382–385, glutamate 405, and arginine 473; that span reads LGMQ. Catalysis depends on residues histidine 516 and glutamate 518.

Belongs to the CTP synthase family. Homotetramer.

It catalyses the reaction UTP + L-glutamine + ATP + H2O = CTP + L-glutamate + ADP + phosphate + 2 H(+). The enzyme catalyses L-glutamine + H2O = L-glutamate + NH4(+). The catalysed reaction is UTP + NH4(+) + ATP = CTP + ADP + phosphate + 2 H(+). Its pathway is pyrimidine metabolism; CTP biosynthesis via de novo pathway; CTP from UDP: step 2/2. Its activity is regulated as follows. Allosterically activated by GTP, when glutamine is the substrate; GTP has no effect on the reaction when ammonia is the substrate. The allosteric effector GTP functions by stabilizing the protein conformation that binds the tetrahedral intermediate(s) formed during glutamine hydrolysis. Inhibited by the product CTP, via allosteric rather than competitive inhibition. In terms of biological role, catalyzes the ATP-dependent amination of UTP to CTP with either L-glutamine or ammonia as the source of nitrogen. Regulates intracellular CTP levels through interactions with the four ribonucleotide triphosphates. In Campylobacter jejuni subsp. jejuni serotype O:6 (strain 81116 / NCTC 11828), this protein is CTP synthase.